A 495-amino-acid polypeptide reads, in one-letter code: MRINPTTSGSAVSTLEEKNLGRIAQIIGPVLDVVFPPGKMPNIYNALVVKGRDTVGQQINVICEVQQLLGNNRVRAVAMSATDGLTRGMEVIDTGAALSVPVGGATLGRIFNVLGEPIDNLGPVDTRTTSPIHRSAPAFIQLDTKLSIFETGIKVVDLLAPYRRGGKIGLFGGAGVGKTVLIMELINNIAKAHGGVSVFGGVGERTREGNDLYMEMKESGVINEKNIAESKVALVYGQMNEPPGARMRVGLTALTMAEYFRDVNEQDVLLFIDNIFRFVQAGSEVSALLGRMPSAVGYQPTLSTEMGSLQERITSTKEGSITSIQAVYVPADDLTDPAPATTFAHLDATTVLSRGLSAKGIYPAVDPLDSTSTMLQPRIVGEEHYETAQRVKQTLQRYKELQDIIAILGLDELSEEDRLTVARARKIERFLSQPFFVAEVFTGSPGKYVGLAETIRGFQLILSGELDSLPEQAFYLVGNIDEATAKAMNLEGEKK.

172 to 179 (GGAGVGKT) is a binding site for ATP.

Belongs to the ATPase alpha/beta chains family. F-type ATPases have 2 components, CF(1) - the catalytic core - and CF(0) - the membrane proton channel. CF(1) has five subunits: alpha(3), beta(3), gamma(1), delta(1), epsilon(1). CF(0) has four main subunits: a(1), b(1), b'(1) and c(9-12).

The protein resides in the plastid. The protein localises to the chloroplast thylakoid membrane. It carries out the reaction ATP + H2O + 4 H(+)(in) = ADP + phosphate + 5 H(+)(out). Functionally, produces ATP from ADP in the presence of a proton gradient across the membrane. The catalytic sites are hosted primarily by the beta subunits. This Hyacinthoides non-scripta (English bluebell) protein is ATP synthase subunit beta, chloroplastic.